A 765-amino-acid polypeptide reads, in one-letter code: MVKAISSNLGYPRLGEKREWKRALEKFWNGTISEKELLAETKILRLHALKKQQDKGIDLIPVGDFSFYDQVLDTSVTFGIIPKRFQHDGGKVSLNTYFDIARGKNDAVASEMTKWFNTNYHYIVPELADAEPKVLDNRALYYYEEAKKELGIEGKPVLVGPITYLKLGKGSDAKSFEVLLDKFIPAYVEILKELEAAGAKWVQIDEPYLATSFDKKEIALFEKVYQAFQTAVPNLKIELQTYFESLDYYEEVVNLPVAAIGIDFVHDHGDSIKALKAHGFPEDKYLAAGVVDGRNVWRSDLDAKLELLTEIANYVADGKLIVQPSNSLLHVPVTKLSEPDLDEVILGGLSFADQKLEEITILTKALTNGAESVAAELEESRAAVTALNESSHRNNLEVQEAIANLKNVRVDRELPFAERIKLQHAWLKLPLFPTTTIGSFPQSPEVRKTRADWLKGNITDAEYNAFIEKETARWIKIQEDLDIDVLVHGEFERTDMVEYFGQKLAGFQATKFGWVQSYGSRAVRPPLIYGDVAFTEEITVKESVYAQSLTKRPVKGMLTAPVTIINWSFVRDDVPESVVANQVGLALRKEVEALERNGIKVIQVDEPALREGLPLKQARWQKYLDDAVYSFKLTTASVQNDTQIHTHMCYSDFDDIIDTISALDADVISIETSRSHGEIISTFEEVTYDKEIGLGVYDIHSPRVPTVTEIQDNIRRALRAIDAKQFWINPDCGLKTRKEPETIAALQDMIKATKEVRAEYQVLEK.

Residues 18 to 21 (REWK) and lysine 114 contribute to the 5-methyltetrahydropteroyltri-L-glutamate site. L-homocysteine is bound by residues 437–439 (IGS) and glutamate 490. Residues 437–439 (IGS) and glutamate 490 contribute to the L-methionine site. Tryptophan 567 provides a ligand contact to 5-methyltetrahydropteroyltri-L-glutamate. Aspartate 605 serves as a coordination point for L-homocysteine. An L-methionine-binding site is contributed by aspartate 605. Glutamate 611 contacts 5-methyltetrahydropteroyltri-L-glutamate. The Zn(2+) site is built by histidine 647, cysteine 649, and glutamate 671. Histidine 700 functions as the Proton donor in the catalytic mechanism. Cysteine 732 contributes to the Zn(2+) binding site.

It belongs to the vitamin-B12 independent methionine synthase family. Requires Zn(2+) as cofactor.

It carries out the reaction 5-methyltetrahydropteroyltri-L-glutamate + L-homocysteine = tetrahydropteroyltri-L-glutamate + L-methionine. The protein operates within amino-acid biosynthesis; L-methionine biosynthesis via de novo pathway; L-methionine from L-homocysteine (MetE route): step 1/1. Functionally, catalyzes the transfer of a methyl group from 5-methyltetrahydrofolate to homocysteine resulting in methionine formation. The chain is 5-methyltetrahydropteroyltriglutamate--homocysteine methyltransferase from Listeria monocytogenes serotype 4b (strain F2365).